A 281-amino-acid polypeptide reads, in one-letter code: MDTQRIKDDEDAIRSALTSLKTATGIPVTMFATVLQDNRLQITQWVGLRTPALQNLVIEPGVGVGGRVVATRRPVGVSDYTRANVISHEKDSAIQDEGLHSIVAVPVIVHREIRGVLYVGVHSAVRLGDTVIEEVTMTARTLEQNLAINSALRRNGVPDGRGSLKANRVMNGAEWEQVRSTHSKLRMLANRVTDEDLRRDLEELCDQMVTPVRIKQTTKLSARELDVLACVALGHTNVEAAEEMGIGAETVKSYLRSVMRKLGAHTRYEAVNAARRIGALP.

Residues 213–278 (RIKQTTKLSA…EAVNAARRIG (66 aa)) form the HTH luxR-type domain.

RamA is a master regulator of acetate metabolism. It positively controls the expression of acnA, aceA, aceB, ack, pta and ramB genes in the presence of acetate. RamA is also a positive regulator of rpf2 gene expression during growth on glucose as the sole carbon source. This Corynebacterium glutamicum (strain ATCC 13032 / DSM 20300 / JCM 1318 / BCRC 11384 / CCUG 27702 / LMG 3730 / NBRC 12168 / NCIMB 10025 / NRRL B-2784 / 534) protein is HTH-type transcriptional activator RamA.